A 357-amino-acid polypeptide reads, in one-letter code: MSEEPTVSPPSPEQPAAQPAKPARPAARRAPRKPATRRPRVASPAQKAREEIQAISQKPVALQVASAPHGSSEDSTSASLPANYPYHTRMRRNEYEKAKHDLQIELLKVQSWVKETGQRVVVLFEGRDAAGKGGTIKRFMEHLNPRGARIVALEKPSSQEQGQWYFQRYIQHLPTAGEMVFFDRSWYNRAGVERVMGFCSPLQYLEFMRQAPELERMLTNSGILLFKYWFSVSREEQLRRFISRRDDPLKHWKLSPIDIKSLDKWDDYTAAKQAMFFHTDTADAPWTVIKSDDKKRARLNCIRHFLHSLDYPDKDRRIAHEPDPLLVGPASRVIEEDEKVYAEAAAAPGHANLDIPA.

The disordered stretch occupies residues 1–83; sequence MSEEPTVSPP…DSTSASLPAN (83 aa). Over residues 14-25 the composition is skewed to low complexity; sequence QPAAQPAKPARP. Residues 26-40 are compositionally biased toward basic residues; that stretch reads AARRAPRKPATRRPR.

The protein belongs to the polyphosphate kinase 2 (PPK2) family. Class I subfamily. As to quaternary structure, homotetramer. Also forms octamers. Mg(2+) is required as a cofactor. The cofactor is Mn(2+).

It carries out the reaction [phosphate](n) + GTP = [phosphate](n+1) + GDP. It catalyses the reaction [phosphate](n) + ATP = [phosphate](n+1) + ADP. In terms of biological role, uses inorganic polyphosphate (polyP) as a donor to convert GDP to GTP and ADP to ATP. Shows a preference for GDP. Can also catalyze the synthesis of polyP from GTP or ATP, but the rate of polyP utilization is 75-fold greater than the rate of polyP synthesis. The chain is GDP-polyphosphate phosphotransferase from Pseudomonas aeruginosa (strain ATCC 15692 / DSM 22644 / CIP 104116 / JCM 14847 / LMG 12228 / 1C / PRS 101 / PAO1).